The primary structure comprises 871 residues: Metabotropic glutamate receptor 6 (871 aa).

The N-terminal stretch at Met1–Gly23 is a signal peptide. Residues Ala24–Trp579 are Extracellular-facing. Cysteines 51 and 93 form a disulfide. L-glutamate contacts are provided by residues Ser148, Ala169–Thr171, and Tyr219. Intrachain disulfides connect Cys238–Cys530, Cys361–Cys377, Cys417–Cys424, Cys512–Cys531, Cys516–Cys534, Cys537–Cys549, and Cys552–Cys565. Residue Asn290 is glycosylated (N-linked (GlcNAc...) asparagine). Asp301 is an L-glutamate binding site. Residue Lys394 coordinates L-glutamate. 2 N-linked (GlcNAc...) asparagine glycosylation sites follow: Asn445 and Asn473. Residue Asn561 is glycosylated (N-linked (GlcNAc...) asparagine). A helical membrane pass occupies residues Ala580–Met602. Over Arg603 to Glu616 the chain is Cytoplasmic. The helical transmembrane segment at Leu617–Ala637 threads the bilayer. At Glu638 to Arg648 the chain is on the extracellular side. The chain crosses the membrane as a helical span at residues Leu649 to Asn667. Residues Arg668–Gln691 lie on the Cytoplasmic side of the membrane. Residues Leu692–Ala712 form a helical membrane-spanning segment. Over Gln713–Asp742 the chain is Extracellular. Residues Leu743 to Ile764 traverse the membrane as a helical segment. Residues Lys765 to Lys777 are Cytoplasmic-facing. The chain crosses the membrane as a helical span at residues Pro778–Thr800. Topologically, residues Ala801–Thr813 are extracellular. Residues Leu814 to Phe839 form a helical membrane-spanning segment. Residues His840 to Lys871 lie on the Cytoplasmic side of the membrane. Residues Arg848–Lys871 form a disordered region.

Belongs to the G-protein coupled receptor 3 family. In terms of assembly, homodimer. Interacts with GPR179. Interacts with photoreceptor synaptic protein LRIT1 (via its N-terminal extracellular domain). Detected in the outer plexiform layer in retina (at protein level).

Its subcellular location is the cell membrane. It localises to the endoplasmic reticulum membrane. The protein resides in the golgi apparatus membrane. The protein localises to the cell projection. It is found in the dendrite. Functionally, G-protein coupled receptor for glutamate. Ligand binding causes a conformation change that triggers signaling via guanine nucleotide-binding proteins (G proteins) and modulates the activity of down-stream effectors, such as adenylate cyclase. Signaling inhibits adenylate cyclase activity. Signaling stimulates TRPM1 channel activity and Ca(2+) uptake. Required for normal vision. This is Metabotropic glutamate receptor 6 (Grm6) from Mus musculus (Mouse).